The primary structure comprises 255 residues: Aliphatic sulfonates import ATP-binding protein SsuB (255 aa).

Residues 12–233 (LLLNAVSKHY…RLGSVRLAEL (222 aa)) form the ABC transporter domain. Position 44–51 (44–51 (GRSGGGKS)) interacts with ATP.

This sequence belongs to the ABC transporter superfamily. Aliphatic sulfonates importer (TC 3.A.1.17.2) family. The complex is composed of two ATP-binding proteins (SsuB), two transmembrane proteins (SsuC) and a solute-binding protein (SsuA).

Its subcellular location is the cell inner membrane. The catalysed reaction is ATP + H2O + aliphatic sulfonate-[sulfonate-binding protein]Side 1 = ADP + phosphate + aliphatic sulfonateSide 2 + [sulfonate-binding protein]Side 1.. Functionally, part of the ABC transporter complex SsuABC involved in aliphatic sulfonates import. Responsible for energy coupling to the transport system. In Escherichia coli O6:H1 (strain CFT073 / ATCC 700928 / UPEC), this protein is Aliphatic sulfonates import ATP-binding protein SsuB.